The chain runs to 294 residues: Glycine--tRNA ligase alpha subunit (294 aa).

It belongs to the class-II aminoacyl-tRNA synthetase family. In terms of assembly, tetramer of two alpha and two beta subunits.

It is found in the cytoplasm. It catalyses the reaction tRNA(Gly) + glycine + ATP = glycyl-tRNA(Gly) + AMP + diphosphate. The polypeptide is Glycine--tRNA ligase alpha subunit (Lawsonia intracellularis (strain PHE/MN1-00)).